The following is a 347-amino-acid chain: MNPFVSVIIYTTIILGTMIVMTSSHWLLTWTGFEMNMLAIIPIMMKSPNPRATEASVKYFMTQATASMLLMLAVIINLLYSGQWTVMKMLNPTASMIMTMALAMKLGLSPFHFWVPEVTQGVPLTAGLILLTWQKLAPLSILYQISPSINPNLILTMSMLSILVGGWGGLNQTQLRKIMAYSSIAHMGWMAAILIYNPTMTILNLTIYLMTTFTMFTMFALNSTTTTLSLSHTWNKTPIITTLMLTILLSMGGLPPLTGFVPKWMIIQEMTKNDSIILPTLMAIMALLNLYFYMRLTYSTTLTMFPSSNNMKMKWQFEASKHKTLLPTMIILSTMLLPLTPMLVVLD.

The next 9 helical transmembrane spans lie at 1 to 21, 59 to 79, 93 to 115, 149 to 169, 178 to 198, 201 to 221, 239 to 259, 274 to 294, and 325 to 345; these read MNPF…MIVM, YFMT…INLL, TASM…HFWV, INPN…GWGG, IMAY…IYNP, TILN…MFAL, IITT…PLTG, DSII…YFYM, and LLPT…MLVV.

It belongs to the complex I subunit 2 family. In terms of assembly, core subunit of respiratory chain NADH dehydrogenase (Complex I) which is composed of 45 different subunits. Interacts with TMEM242.

It is found in the mitochondrion inner membrane. It carries out the reaction a ubiquinone + NADH + 5 H(+)(in) = a ubiquinol + NAD(+) + 4 H(+)(out). Functionally, core subunit of the mitochondrial membrane respiratory chain NADH dehydrogenase (Complex I) which catalyzes electron transfer from NADH through the respiratory chain, using ubiquinone as an electron acceptor. Essential for the catalytic activity and assembly of complex I. This Hippopotamus amphibius (Hippopotamus) protein is NADH-ubiquinone oxidoreductase chain 2.